Consider the following 239-residue polypeptide: Transcriptional regulatory protein BtsR (239 aa).

Residues 3 to 116 (KVLIVDDEPL…RLEKTLHRLR (114 aa)) form the Response regulatory domain. 4-aspartylphosphate is present on Asp54. The HTH LytTR-type domain occupies 137–239 (IPCTGHSRIY…LKSLKEAIGL (103 aa)).

Phosphorylated by BtsS.

In terms of biological role, member of the two-component regulatory system BtsS/BtsR. BtsR regulates expression of btsT by binding to its promoter region. The polypeptide is Transcriptional regulatory protein BtsR (Salmonella typhimurium (strain LT2 / SGSC1412 / ATCC 700720)).